The primary structure comprises 354 residues: Holliday junction branch migration complex subunit RuvB (354 aa).

A large ATPase domain (RuvB-L) region spans residues 1 to 183 (MTGDNLVSAY…FGFVAHLDFY (183 aa)). ATP-binding positions include Arg-23, Gly-64, Lys-67, Thr-68, Ser-69, 130 to 132 (EDF), Arg-173, Tyr-183, and Arg-220. Residue Thr-68 coordinates Mg(2+). The tract at residues 184-254 (SPADLETLLH…AARAALLVYD (71 aa)) is small ATPAse domain (RuvB-S). Residues 257 to 354 (ALGLDRLDRQ…DLFSVEPDQP (98 aa)) form a head domain (RuvB-H) region. 2 residues coordinate DNA: Arg-312 and Arg-317. Positions 330–354 (TPPNGIFGSDAPPASDLFSVEPDQP) are disordered.

It belongs to the RuvB family. Homohexamer. Forms an RuvA(8)-RuvB(12)-Holliday junction (HJ) complex. HJ DNA is sandwiched between 2 RuvA tetramers; dsDNA enters through RuvA and exits via RuvB. An RuvB hexamer assembles on each DNA strand where it exits the tetramer. Each RuvB hexamer is contacted by two RuvA subunits (via domain III) on 2 adjacent RuvB subunits; this complex drives branch migration. In the full resolvosome a probable DNA-RuvA(4)-RuvB(12)-RuvC(2) complex forms which resolves the HJ.

It is found in the cytoplasm. The enzyme catalyses ATP + H2O = ADP + phosphate + H(+). The RuvA-RuvB-RuvC complex processes Holliday junction (HJ) DNA during genetic recombination and DNA repair, while the RuvA-RuvB complex plays an important role in the rescue of blocked DNA replication forks via replication fork reversal (RFR). RuvA specifically binds to HJ cruciform DNA, conferring on it an open structure. The RuvB hexamer acts as an ATP-dependent pump, pulling dsDNA into and through the RuvAB complex. RuvB forms 2 homohexamers on either side of HJ DNA bound by 1 or 2 RuvA tetramers; 4 subunits per hexamer contact DNA at a time. Coordinated motions by a converter formed by DNA-disengaged RuvB subunits stimulates ATP hydrolysis and nucleotide exchange. Immobilization of the converter enables RuvB to convert the ATP-contained energy into a lever motion, pulling 2 nucleotides of DNA out of the RuvA tetramer per ATP hydrolyzed, thus driving DNA branch migration. The RuvB motors rotate together with the DNA substrate, which together with the progressing nucleotide cycle form the mechanistic basis for DNA recombination by continuous HJ branch migration. Branch migration allows RuvC to scan DNA until it finds its consensus sequence, where it cleaves and resolves cruciform DNA. The polypeptide is Holliday junction branch migration complex subunit RuvB (Salinispora arenicola (strain CNS-205)).